A 371-amino-acid polypeptide reads, in one-letter code: DNA-directed RNA polymerase subunit alpha (371 aa).

Positions 1–248 are alpha N-terminal domain (alpha-NTD); that stretch reads MSVKYGKFEM…KHFEVFNQFN (248 aa). The segment at 264–371 is alpha C-terminal domain (alpha-CTD); that stretch reads DQDELMDKLS…KELVKHEDAK (108 aa).

It belongs to the RNA polymerase alpha chain family. In terms of assembly, homodimer. The RNAP catalytic core consists of 2 alpha, 1 beta, 1 beta' and 1 omega subunit. When a sigma factor is associated with the core the holoenzyme is formed, which can initiate transcription.

It carries out the reaction RNA(n) + a ribonucleoside 5'-triphosphate = RNA(n+1) + diphosphate. Functionally, DNA-dependent RNA polymerase catalyzes the transcription of DNA into RNA using the four ribonucleoside triphosphates as substrates. This chain is DNA-directed RNA polymerase subunit alpha, found in Protochlamydia amoebophila (strain UWE25).